The following is a 109-amino-acid chain: U4-lycotoxin-Ls1d (109 aa).

Positions 1 to 22 (MKVLVLFSVLFLTLFSYSSTEA) are cleaved as a signal peptide. Positions 23–44 (MDEFDSDAEEDMLSLMANEQVR) are excised as a propeptide. Positions 45 to 88 (AKACTPRLHDCSHDRHSCCRGELFKDVCYCFYPEGEDKTEVCSC) are knottin domain. 4 disulfide bridges follow: C48/C63, C55/C72, C62/C88, and C74/C86. Residues 89-108 (QQPKSHKYIEKVVDKARTVV) form a linear cationic cytotoxin domain region.

It belongs to the neurotoxin 19 (CSTX) family. 05 (U4-Lctx) subfamily. In terms of tissue distribution, expressed by the venom gland.

It localises to the secreted. Its function is as follows. Enhances the high-affinity desensitization of human P2RX3 purinoceptors. The sequence is that of U4-lycotoxin-Ls1d from Lycosa singoriensis (Wolf spider).